The chain runs to 321 residues: Zinc finger protein 524 (321 aa).

Composition is skewed to polar residues over residues 1–14 and 39–48; these read MDNP…STLS and ATTSNRTLKS. Disordered stretches follow at residues 1 to 80 and 86 to 105; these read MDNP…DLLL and VPYT…SGSK. The segment at residues 49-59 is a DNA-binding region (a.T hook); the sequence is SLPRKRGRPPR. 4 C2H2-type zinc fingers span residues 109–131, 137–159, 165–187, and 193–216; these read HFCP…SISH, HVCK…CNIH, FRCV…HRIH, and YQCP…KRKH. A disordered region spans residues 248-321; it reads GVQEESPEGK…PGAIGHPPVD (74 aa). Residues 262 to 271 show a composition bias toward polar residues; it reads PISSTTSPLS. Over residues 274–285 the composition is skewed to gly residues; sequence TAGGSAGAGRGQ.

The protein belongs to the krueppel C2H2-type zinc-finger protein family.

The protein localises to the nucleus. Its function is as follows. May be involved in transcriptional regulation. The polypeptide is Zinc finger protein 524 (Znf524) (Mus musculus (Mouse)).